Here is a 319-residue protein sequence, read N- to C-terminus: Malate dehydrogenase (319 aa).

NAD(+) is bound by residues 10–15 (GAGNIG) and Asp-34. Substrate contacts are provided by Arg-83 and Arg-89. NAD(+) is bound by residues Asn-96 and 119-121 (ITN). The substrate site is built by Asn-121 and Arg-152. The active-site Proton acceptor is His-176.

The protein belongs to the LDH/MDH superfamily. MDH type 3 family.

The catalysed reaction is (S)-malate + NAD(+) = oxaloacetate + NADH + H(+). Functionally, catalyzes the reversible oxidation of malate to oxaloacetate. This Francisella novicida protein is Malate dehydrogenase.